The chain runs to 97 residues: Co-chaperonin GroES (97 aa).

The protein belongs to the GroES chaperonin family. In terms of assembly, heptamer of 7 subunits arranged in a ring. Interacts with the chaperonin GroEL.

The protein resides in the cytoplasm. Its function is as follows. Together with the chaperonin GroEL, plays an essential role in assisting protein folding. The GroEL-GroES system forms a nano-cage that allows encapsulation of the non-native substrate proteins and provides a physical environment optimized to promote and accelerate protein folding. GroES binds to the apical surface of the GroEL ring, thereby capping the opening of the GroEL channel. This chain is Co-chaperonin GroES, found in Yersinia enterocolitica serotype O:8 / biotype 1B (strain NCTC 13174 / 8081).